Consider the following 338-residue polypeptide: Phosphatidylinositol:ceramide inositolphosphotransferase (338 aa).

The Cytoplasmic portion of the chain corresponds to 1 to 36 (MTSHVTAHDVGGNEDIGTDHVPWYKQPLPLCTQVMR). A helical membrane pass occupies residues 37-57 (FILLLLLTVMFLGVAILVANA). The Extracellular portion of the chain corresponds to 58–87 (RMPDPEKVRPLPDLLLESIPKVALLENGTN). The chain crosses the membrane as a helical span at residues 88–108 (VIIFLLNATTVVVGFKVFLLE). The Cytoplasmic segment spans residues 109–116 (RHMNGLPR). The chain crosses the membrane as a helical span at residues 117-137 (VTFLVGVPKIGSFLNRMAFGV). Over 138-152 (LDSGRRPFPLKNVFP) the chain is Extracellular. Residues 153–173 (IMAIRFLTSYAVVMVFRAFVI) traverse the membrane as a helical segment. The Cytoplasmic segment spans residues 174-189 (MGTSYPATDNHCQNPQ). A helical membrane pass occupies residues 190–210 (VIEHPVLNVILTLVTLGSGAI). Topologically, residues 211–222 (HCGDLMFSGHTM) are extracellular. Histidine 220 is an active-site residue. Residues 223-243 (ILSLAFILAWDYSPFLHPWAV) traverse the membrane as a helical segment. Topologically, residues 244–338 (RVWVSVLLPI…TDASAALPEH (95 aa)) are cytoplasmic. Residues histidine 264 and aspartate 268 contribute to the active site.

This sequence belongs to the sphingomyelin synthase family.

It is found in the membrane. Bidirectional lipid inositolphosphotransferase capable of converting phosphatidylinositol (PI) and ceramide to inositol-phosphorylceramide (IPC) and diacylglycerol (DAG) and vice versa. Direction is dependent on the relative concentrations of DAG and ceramide as phosphoinositol acceptors. Essential for viability of the pathogenic bloodstream stage of this human protozoan parasite and, consequently, can be considered as potential drug target. In Leishmania major, this protein is Phosphatidylinositol:ceramide inositolphosphotransferase.